A 273-amino-acid chain; its full sequence is Formamidopyrimidine-DNA glycosylase (273 aa).

Pro2 acts as the Schiff-base intermediate with DNA in catalysis. Glu3 serves as the catalytic Proton donor. Lys58 (proton donor; for beta-elimination activity) is an active-site residue. DNA-binding residues include His92, Arg111, and Lys153. The FPG-type zinc finger occupies 238-272 (KVYGREGQSCLSCSSTIIKIKHSGRSTFYCKTCQY). Arg262 (proton donor; for delta-elimination activity) is an active-site residue.

It belongs to the FPG family. Monomer. It depends on Zn(2+) as a cofactor.

The catalysed reaction is Hydrolysis of DNA containing ring-opened 7-methylguanine residues, releasing 2,6-diamino-4-hydroxy-5-(N-methyl)formamidopyrimidine.. It catalyses the reaction 2'-deoxyribonucleotide-(2'-deoxyribose 5'-phosphate)-2'-deoxyribonucleotide-DNA = a 3'-end 2'-deoxyribonucleotide-(2,3-dehydro-2,3-deoxyribose 5'-phosphate)-DNA + a 5'-end 5'-phospho-2'-deoxyribonucleoside-DNA + H(+). Involved in base excision repair of DNA damaged by oxidation or by mutagenic agents. Acts as a DNA glycosylase that recognizes and removes damaged bases. Has a preference for oxidized purines, such as 7,8-dihydro-8-oxoguanine (8-oxoG). Has AP (apurinic/apyrimidinic) lyase activity and introduces nicks in the DNA strand. Cleaves the DNA backbone by beta-delta elimination to generate a single-strand break at the site of the removed base with both 3'- and 5'-phosphates. In Rickettsia peacockii (strain Rustic), this protein is Formamidopyrimidine-DNA glycosylase.